We begin with the raw amino-acid sequence, 332 residues long: Ferredoxin--NADP reductase (332 aa).

7 residues coordinate FAD: D33, Q41, Y46, A86, I121, D282, and S325.

The protein belongs to the ferredoxin--NADP reductase type 2 family. In terms of assembly, homodimer. FAD is required as a cofactor.

It catalyses the reaction 2 reduced [2Fe-2S]-[ferredoxin] + NADP(+) + H(+) = 2 oxidized [2Fe-2S]-[ferredoxin] + NADPH. This chain is Ferredoxin--NADP reductase, found in Metallosphaera sedula (strain ATCC 51363 / DSM 5348 / JCM 9185 / NBRC 15509 / TH2).